The primary structure comprises 422 residues: Alcohol dehydrogenase 4 (422 aa).

The transit peptide at 1-29 (MSILRSPFRLIRSPARFFPSLFHSSCNQS) directs the protein to the mitochondrion. NAD(+) contacts are provided by D82, N114, G141, S142, T181, T182, T190, F192, K203, and G225. Residues D237, H241, and H306 each coordinate Fe(2+). 2 residues coordinate NAD(+): H310 and H320. Fe(2+) is bound at residue H320.

It belongs to the iron-containing alcohol dehydrogenase family. Zn(2+) is required as a cofactor.

It is found in the mitochondrion matrix. The catalysed reaction is a primary alcohol + NAD(+) = an aldehyde + NADH + H(+). It carries out the reaction a secondary alcohol + NAD(+) = a ketone + NADH + H(+). The enzyme catalyses ethanol + NAD(+) = acetaldehyde + NADH + H(+). Functionally, involved in ethanol oxidation in mitochondria. The polypeptide is Alcohol dehydrogenase 4 (adh4) (Schizosaccharomyces pombe (strain 972 / ATCC 24843) (Fission yeast)).